Reading from the N-terminus, the 328-residue chain is UPF0104 membrane protein AF_2231 (328 aa).

A run of 6 helical transmembrane segments spans residues 31–51 (NWLLLIVAFLLQVSFWLLWAL), 116–136 (ILDSMYFSTALPVFLIVTGFS), 139–159 (FGFKIAIIFITLLLVFLYILY), 221–241 (LVTLVMWSASFAIPSVILVAL), 245–265 (AYFLYSYTAQLIIVIVSLVPL), and 277–297 (MAYLYSNFVPTNVLGVLVGLW).

The protein belongs to the UPF0104 family.

It is found in the cell membrane. The sequence is that of UPF0104 membrane protein AF_2231 from Archaeoglobus fulgidus (strain ATCC 49558 / DSM 4304 / JCM 9628 / NBRC 100126 / VC-16).